The chain runs to 96 residues: UPF0235 protein VIBHAR_03581 (96 aa).

Belongs to the UPF0235 family.

The protein is UPF0235 protein VIBHAR_03581 of Vibrio campbellii (strain ATCC BAA-1116).